The sequence spans 203 residues: NAD(P)H dehydrogenase (quinone) (203 aa).

A Flavodoxin-like domain is found at 3–194 (VLIVYYSMYG…AGARFQGRYV (192 aa)). Residues 9–14 (SMYGHI) and 82–84 (TRF) each bind FMN. NAD(+) is bound at residue tyrosine 11. Position 102 (tryptophan 102) interacts with substrate. FMN-binding positions include 117-123 (SSATQHG) and histidine 138.

Belongs to the WrbA family. Requires FMN as cofactor.

It carries out the reaction a quinone + NADH + H(+) = a quinol + NAD(+). It catalyses the reaction a quinone + NADPH + H(+) = a quinol + NADP(+). This chain is NAD(P)H dehydrogenase (quinone), found in Geobacter sulfurreducens (strain ATCC 51573 / DSM 12127 / PCA).